A 118-amino-acid chain; its full sequence is Myotrophin (118 aa).

The residue at position 2 (Cys2) is an N-acetylcysteine. The ANK 1 repeat unit spans residues 2–30; the sequence is CDKEFMWALKNGDLDEVKDYVAKGEDVNR. An N6-acetyllysine mark is found at Lys4, Lys11, and Lys24. Thr31 carries the post-translational modification Phosphothreonine. ANK repeat units lie at residues 34–66 and 67–99; these read GGRKPLHYAADCGQLEILEFLLLKGADINAPDK and HHITPLLSAVYEGHVSCVKLLLSKGADKTVKGP.

Belongs to the myotrophin family. In terms of assembly, interacts with the heterodimer formed by CAPZA1 and CAPZB. Interacts with RELA.

The protein resides in the cytoplasm. Its subcellular location is the nucleus. The protein localises to the perinuclear region. Functionally, plays a role in the regulation of the growth of actin filaments. Inhibits the activity of the F-actin-capping protein complex formed by the CAPZA1 and CAPZB heterodimer. Promotes dimerization of NF-kappa-B subunits and regulates NF-kappa-B transcription factor activity. Promotes growth of cardiomyocytes, but not cardiomyocyte proliferation. Promotes cardiac muscle hypertrophy. The protein is Myotrophin (Mtpn) of Rattus norvegicus (Rat).